Here is a 391-residue protein sequence, read N- to C-terminus: Thioredoxin-interacting protein (391 aa).

A Glycyl lysine isopeptide (Lys-Gly) (interchain with G-Cter in ubiquitin) cross-link involves residue K212. A Phosphoserine modification is found at S361.

The protein belongs to the arrestin family. In terms of assembly, homodimer; disulfide-linked. Interacts with TXN/thioredoxin through its redox-active site. Interacts with transcriptional repressors ZBTB16, ZBTB32 and HDAC1. Interacts with DDIT4. Post-translationally, ubiquitinated; undergoes heterotypic 'Lys-48'-/'Lys-63'-branched polyubiquitination catalyzed by ITCH and UBR5 resulting in proteasomal degradation. Deubiquitinated by USP5, leading to TXNIP stabilization.

It localises to the cytoplasm. Its subcellular location is the nucleus. Its function is as follows. May act as an oxidative stress mediator by inhibiting thioredoxin activity or by limiting its bioavailability. Interacts with COPS5 and restores COPS5-induced suppression of CDKN1B stability, blocking the COPS5-mediated translocation of CDKN1B from the nucleus to the cytoplasm. Functions as a transcriptional repressor, possibly by acting as a bridge molecule between transcription factors and corepressor complexes, and over-expression will induce G0/G1 cell cycle arrest. Required for the maturation of natural killer cells. Acts as a suppressor of tumor cell growth. Inhibits the proteasomal degradation of DDIT4, and thereby contributes to the inhibition of the mammalian target of rapamycin complex 1 (mTORC1). The sequence is that of Thioredoxin-interacting protein (TXNIP) from Homo sapiens (Human).